Reading from the N-terminus, the 1093-residue chain is uncharacterized protein (1093 aa).

This is an uncharacterized protein from Escherichia coli (strain K12).